The following is a 603-amino-acid chain: ADP-ribosylation factor-binding protein GGA2 (603 aa).

The tract at residues 1–22 is disordered; that stretch reads MAATAVAAGTGSPAGTESAEGG. Positions 13–22 are enriched in low complexity; that stretch reads PAGTESAEGG. Positions 36-166 constitute a VHS domain; it reads ATDPSMAEQD…MLKKQGIIKQ (131 aa). The region spanning 190–317 is the GAT domain; the sequence is DEEKSKLLTR…GVRLYKQVVE (128 aa). The segment at 318–473 is unstructured hinge; sequence GRVSAGNAVP…VFVPLESVKP (156 aa). One can recognise a GAE domain in the interval 474-595; sequence SSLPPIVVYD…SEVGEVKDFP (122 aa).

The protein belongs to the GGA protein family. Monomer. Interacts with NECAP1, TSG101, UBC and AFTPH/aftiphilin. Interacts with CNST. Interacts with GGA1 and GGA3. Binds to clathrin and activated ARFs, such as ARF1, ARF5 and ARF6. Binds RABEP1 and RABGEF1. Interacts with the type-I membrane proteins LRP3, M6PR/CD-MPR, IGF2R/CI-MPR and BACE1. Interacts (via N-terminal VHS domain) with SORL1/sorLA and SORT1 (via C-terminal cytosolic domain). Binds the accessory proteins CCDC91, P200, SYNRG, EPN4 and NECAP2. Interacts with ADRA2B. Interacts (via VHS domain) with PIK4B; the interaction is important for PIK4B location at the Golgi apparatus membrane. Post-translationally, ubiquitinated.

It localises to the golgi apparatus. The protein resides in the trans-Golgi network membrane. Its subcellular location is the endosome membrane. The protein localises to the early endosome membrane. In terms of biological role, plays a role in protein sorting and trafficking between the trans-Golgi network (TGN) and endosomes. Mediates the ARF-dependent recruitment of clathrin to the TGN and binds ubiquitinated proteins and membrane cargo molecules with a cytosolic acidic cluster-dileucine (DXXLL) motif. Mediates export of the GPCR receptor ADRA2B to the cell surface. Regulates retrograde transport of phosphorylated form of BACE1 from endosomes to the trans-Golgi network. This Mus musculus (Mouse) protein is ADP-ribosylation factor-binding protein GGA2 (Gga2).